The chain runs to 761 residues: Copper-exporting P-type ATPase (761 aa).

Thr2 is modified (N-acetylthreonine). The 65-residue stretch at 14–78 (QRIQLRISGM…AVRRAGYQAD (65 aa)) folds into the HMA domain. The Cu(+) site is built by Cys25 and Cys28. A run of 6 helical transmembrane segments spans residues 102-122 (LAIA…FGVV), 129-149 (GWQW…AWPF), 164-184 (METL…YTVF), 199-219 (LLGS…FVLV), 361-381 (VFVP…LIAG), and 387-407 (AVSA…GLAT). Asp443 serves as the catalytic 4-aspartylphosphate intermediate. Transmembrane regions (helical) follow at residues 695–714 (MVWA…AGLL) and 718–735 (VAGA…SNSL).

The protein belongs to the cation transport ATPase (P-type) (TC 3.A.3) family. Type IB subfamily.

It localises to the cell membrane. It carries out the reaction Cu(+)(in) + ATP + H2O = Cu(+)(out) + ADP + phosphate + H(+). With respect to regulation, ATPase activity is stimulated by Cu(+) ions. Involved in copper export. Could be involved in the copper detoxification of mycobacterial cells. This chain is Copper-exporting P-type ATPase (ctpA), found in Mycobacterium tuberculosis (strain ATCC 25618 / H37Rv).